The chain runs to 444 residues: UDP-N-acetylglucosamine 1-carboxyvinyltransferase (444 aa).

22–23 (KN) contributes to the phosphoenolpyruvate binding site. Arg94 contributes to the UDP-N-acetyl-alpha-D-glucosamine binding site. Asp119 serves as the catalytic Proton donor. 2 residues coordinate UDP-N-acetyl-alpha-D-glucosamine: Asp309 and Val331.

Belongs to the EPSP synthase family. MurA subfamily.

The protein localises to the cytoplasm. It catalyses the reaction phosphoenolpyruvate + UDP-N-acetyl-alpha-D-glucosamine = UDP-N-acetyl-3-O-(1-carboxyvinyl)-alpha-D-glucosamine + phosphate. The protein operates within cell wall biogenesis; peptidoglycan biosynthesis. Its function is as follows. Cell wall formation. Adds enolpyruvyl to UDP-N-acetylglucosamine. The sequence is that of UDP-N-acetylglucosamine 1-carboxyvinyltransferase from Chlamydia abortus (strain DSM 27085 / S26/3) (Chlamydophila abortus).